The primary structure comprises 454 residues: Bifunctional protein GlmU (454 aa).

Positions 1 to 227 (MTQLSVVILA…FMEVEGANNR (227 aa)) are pyrophosphorylase. Residues 9–12 (LAAG), K23, Q74, 79–80 (GT), 101–103 (YGD), G138, E152, N167, and N225 contribute to the UDP-N-acetyl-alpha-D-glucosamine site. D103 serves as a coordination point for Mg(2+). N225 lines the Mg(2+) pocket. The tract at residues 228-248 (LQLAALERFYQKTQAEKLLLA) is linker. The interval 249-454 (GVRLIDQARF…QGWQRPTKKK (206 aa)) is N-acetyltransferase. The UDP-N-acetyl-alpha-D-glucosamine site is built by R331 and K349. H361 functions as the Proton acceptor in the catalytic mechanism. 2 residues coordinate UDP-N-acetyl-alpha-D-glucosamine: Y364 and N375. Residues A378, 384-385 (NY), S403, A421, and R438 each bind acetyl-CoA.

In the N-terminal section; belongs to the N-acetylglucosamine-1-phosphate uridyltransferase family. The protein in the C-terminal section; belongs to the transferase hexapeptide repeat family. In terms of assembly, homotrimer. It depends on Mg(2+) as a cofactor.

It localises to the cytoplasm. The enzyme catalyses alpha-D-glucosamine 1-phosphate + acetyl-CoA = N-acetyl-alpha-D-glucosamine 1-phosphate + CoA + H(+). It carries out the reaction N-acetyl-alpha-D-glucosamine 1-phosphate + UTP + H(+) = UDP-N-acetyl-alpha-D-glucosamine + diphosphate. The protein operates within nucleotide-sugar biosynthesis; UDP-N-acetyl-alpha-D-glucosamine biosynthesis; N-acetyl-alpha-D-glucosamine 1-phosphate from alpha-D-glucosamine 6-phosphate (route II): step 2/2. It functions in the pathway nucleotide-sugar biosynthesis; UDP-N-acetyl-alpha-D-glucosamine biosynthesis; UDP-N-acetyl-alpha-D-glucosamine from N-acetyl-alpha-D-glucosamine 1-phosphate: step 1/1. It participates in bacterial outer membrane biogenesis; LPS lipid A biosynthesis. Catalyzes the last two sequential reactions in the de novo biosynthetic pathway for UDP-N-acetylglucosamine (UDP-GlcNAc). The C-terminal domain catalyzes the transfer of acetyl group from acetyl coenzyme A to glucosamine-1-phosphate (GlcN-1-P) to produce N-acetylglucosamine-1-phosphate (GlcNAc-1-P), which is converted into UDP-GlcNAc by the transfer of uridine 5-monophosphate (from uridine 5-triphosphate), a reaction catalyzed by the N-terminal domain. This is Bifunctional protein GlmU from Actinobacillus pleuropneumoniae serotype 7 (strain AP76).